A 2359-amino-acid polypeptide reads, in one-letter code: Pre-mRNA-processing-splicing factor 8B (2359 aa).

A disordered region spans residues 1–50 (MWNIDGTSLAPPGTDGSRMQTPSHPADHPSYTAPSNRNTPTVPTPEDAEA). Polar residues predominate over residues 32–41 (TAPSNRNTPT). In terms of domain architecture, MPN spans 2129–2260 (TYIMPKNILK…LTSYKLTQAG (132 aa)).

It is found in the nucleus. In terms of biological role, functions as a scaffold that mediates the ordered assembly of spliceosomal proteins and snRNAs. Required for the assembly of the U4/U6-U5 tri-snRNP complex. The chain is Pre-mRNA-processing-splicing factor 8B from Arabidopsis thaliana (Mouse-ear cress).